Here is a 78-residue protein sequence, read N- to C-terminus: MICOS complex subunit MIC10 (78 aa).

The residue at position 2 (S2) is an N-acetylserine. Residues 17–36 (AVVKIGTGFGLGIVFSLTFF) traverse the membrane as a helical segment. At 37 to 78 (KRRMWPLAFGSGMGLGMAYSNCQHDFQAPYLLHGKYVKEQEQ) the chain is on the mitochondrial intermembrane side.

Belongs to the MICOS complex subunit Mic10 family. As to quaternary structure, component of the mitochondrial contact site and cristae organizing system (MICOS) complex, composed of at least MICOS10/MIC10, CHCHD3/MIC19, CHCHD6/MIC25, APOOL/MIC27, IMMT/MIC60, APOO/MIC23/MIC26 and MICOS13/MIC13. This complex was also known under the names MINOS or MitOS complex. The MICOS complex associates with mitochondrial outer membrane proteins SAMM50, MTX1 and MTX2 (together described as components of the mitochondrial outer membrane sorting assembly machinery (SAM) complex) and DNAJC11, mitochondrial inner membrane protein TMEM11 and with HSPA9. The MICOS and SAM complexes together with DNAJC11 are part of a large protein complex spanning both membranes termed the mitochondrial intermembrane space bridging (MIB) complex. Interacts with IMMT/MIC60 and MICOS13/MIC13. Interacts with APOO/MIC23/MIC26 and APOOL/MIC27. Interacts with ARMC1.

Its subcellular location is the mitochondrion inner membrane. Component of the MICOS complex, a large protein complex of the mitochondrial inner membrane that plays crucial roles in the maintenance of crista junctions, inner membrane architecture, and formation of contact sites to the outer membrane. In Homo sapiens (Human), this protein is MICOS complex subunit MIC10.